We begin with the raw amino-acid sequence, 102 residues long: MDKLQKMISEKSVVIFSKNSCCMSHTIKTLFIDFGVNPTIYELDEINRGKEIEQALAQLGCSPTVPVVFIGGQLVGGANQVMSLHLNRSLVPMLKRVGALWL.

One can recognise a Glutaredoxin domain in the interval 1-101; that stretch reads MDKLQKMISE…PMLKRVGALW (101 aa). Residue C21 participates in [2Fe-2S] cluster binding. The Responsive for interaction with TGA factors motif lies at 99 to 102; that stretch reads ALWL.

This sequence belongs to the glutaredoxin family. CC-type subfamily.

The protein localises to the cytoplasm. Its subcellular location is the nucleus. May only reduce GSH-thiol disulfides, but not protein disulfides. The chain is Monothiol glutaredoxin-S4 (GRXS4) from Arabidopsis thaliana (Mouse-ear cress).